The sequence spans 193 residues: Flagellar transcriptional regulator FlhC (193 aa).

Positions 137, 140, 158, and 161 each coordinate Zn(2+).

The protein belongs to the FlhC family. Heterohexamer composed of two FlhC and four FlhD subunits. Each FlhC binds a FlhD dimer, forming a heterotrimer, and a hexamer assembles by dimerization of two heterotrimers. Zn(2+) is required as a cofactor.

It localises to the cytoplasm. Its function is as follows. Functions in complex with FlhD as a master transcriptional regulator that regulates transcription of several flagellar and non-flagellar operons by binding to their promoter region. Activates expression of class 2 flagellar genes, including fliA, which is a flagellum-specific sigma factor that turns on the class 3 genes. Also regulates genes whose products function in a variety of physiological pathways. This Pectobacterium carotovorum (Erwinia carotovora) protein is Flagellar transcriptional regulator FlhC.